A 162-amino-acid polypeptide reads, in one-letter code: MIINIGELARVSDKSRSKAAGKLVEVVSIQLKHGVKDEDSEVKVRIIPKDGKSKPQFGYVRAKFLESAFLKAVPAKGIETIDTSHVGVDFKWKLGQAIKFIAPCEFNFIKDDGRVVYTRAMCGYITDQWVEDGVKLYNVVFLGTYKVIPESWIKHYSNALYA.

In terms of assembly, monomer. Homodimer.

Functionally, compacts the host nucleoid. Probably dysregulates hundreds of host genes including derepression of most of the H-NS regulon. Plays a role in the transcriptional regulation of middle promoters. The polypeptide is Transcription regulatory protein motB (motB) (Enterobacteria phage T4 (Bacteriophage T4)).